A 470-amino-acid polypeptide reads, in one-letter code: ATP synthase subunit beta (470 aa).

155 to 162 (GGAGVGKT) contacts ATP.

The protein belongs to the ATPase alpha/beta chains family. As to quaternary structure, F-type ATPases have 2 components, CF(1) - the catalytic core - and CF(0) - the membrane proton channel. CF(1) has five subunits: alpha(3), beta(3), gamma(1), delta(1), epsilon(1). CF(0) has three main subunits: a(1), b(2) and c(9-12). The alpha and beta chains form an alternating ring which encloses part of the gamma chain. CF(1) is attached to CF(0) by a central stalk formed by the gamma and epsilon chains, while a peripheral stalk is formed by the delta and b chains.

Its subcellular location is the cell membrane. The enzyme catalyses ATP + H2O + 4 H(+)(in) = ADP + phosphate + 5 H(+)(out). Its function is as follows. Produces ATP from ADP in the presence of a proton gradient across the membrane. The catalytic sites are hosted primarily by the beta subunits. This Staphylococcus aureus (strain MW2) protein is ATP synthase subunit beta.